Here is a 577-residue protein sequence, read N- to C-terminus: Beta-fructofuranosidase, insoluble isoenzyme 1 (577 aa).

The first 22 residues, 1–22 (MGTRLLALAPWLLLLLLQLAGA), serve as a signal peptide directing secretion. The active site involves Asp63. N-linked (GlcNAc...) asparagine glycosylation is found at Asn158, Asn183, and Asn333.

Belongs to the glycosyl hydrolase 32 family.

It is found in the secreted. The protein resides in the extracellular space. The protein localises to the apoplast. It localises to the cell wall. The enzyme catalyses Hydrolysis of terminal non-reducing beta-D-fructofuranoside residues in beta-D-fructofuranosides.. Functionally, may play a role in sucrose partitioning during seed development and in stress response. The chain is Beta-fructofuranosidase, insoluble isoenzyme 1 (CIN1) from Oryza sativa subsp. indica (Rice).